The primary structure comprises 314 residues: Homoserine O-acetyltransferase (314 aa).

Cys-142 acts as the Acyl-thioester intermediate in catalysis. Substrate is bound by residues Lys-163 and Ser-192. The active-site Proton acceptor is the His-235. The active site involves Glu-237. Residue Arg-249 participates in substrate binding.

This sequence belongs to the MetA family.

It localises to the cytoplasm. The enzyme catalyses L-homoserine + acetyl-CoA = O-acetyl-L-homoserine + CoA. It functions in the pathway amino-acid biosynthesis; L-methionine biosynthesis via de novo pathway; O-acetyl-L-homoserine from L-homoserine: step 1/1. Transfers an acetyl group from acetyl-CoA to L-homoserine, forming acetyl-L-homoserine. The polypeptide is Homoserine O-acetyltransferase (Streptococcus pneumoniae serotype 4 (strain ATCC BAA-334 / TIGR4)).